Consider the following 273-residue polypeptide: Putative phosphoenolpyruvate synthase regulatory protein (273 aa).

153–160 (AVSRAGKT) serves as a coordination point for ADP.

This sequence belongs to the pyruvate, phosphate/water dikinase regulatory protein family. PSRP subfamily.

The enzyme catalyses [pyruvate, water dikinase] + ADP = [pyruvate, water dikinase]-phosphate + AMP + H(+). The catalysed reaction is [pyruvate, water dikinase]-phosphate + phosphate + H(+) = [pyruvate, water dikinase] + diphosphate. Functionally, bifunctional serine/threonine kinase and phosphorylase involved in the regulation of the phosphoenolpyruvate synthase (PEPS) by catalyzing its phosphorylation/dephosphorylation. The sequence is that of Putative phosphoenolpyruvate synthase regulatory protein from Stenotrophomonas maltophilia (strain K279a).